The chain runs to 585 residues: Pyruvate kinase (585 aa).

Residue Arg32 coordinates substrate. Residues Asn34, Ser36, Asp66, and Thr67 each contribute to the K(+) site. Asn34–His37 contributes to the ATP binding site. ATP is bound by residues Arg73 and Lys156. Glu221 is a Mg(2+) binding site. Substrate-binding residues include Gly244, Asp245, and Thr277. Asp245 contributes to the Mg(2+) binding site.

It belongs to the pyruvate kinase family. This sequence in the C-terminal section; belongs to the PEP-utilizing enzyme family. It depends on Mg(2+) as a cofactor. K(+) is required as a cofactor.

The enzyme catalyses pyruvate + ATP = phosphoenolpyruvate + ADP + H(+). It functions in the pathway carbohydrate degradation; glycolysis; pyruvate from D-glyceraldehyde 3-phosphate: step 5/5. This Staphylococcus aureus (strain bovine RF122 / ET3-1) protein is Pyruvate kinase (pyk).